The primary structure comprises 784 residues: Ribosome biogenesis protein BOP1 homolog (784 aa).

Over residues Met1–Gly11 the composition is skewed to basic residues. The interval Met1 to Ile159 is disordered. Composition is skewed to acidic residues over residues Ser27–Leu36, Glu45–Asp54, Ser62–Gly73, and Ala84–Glu111. 2 stretches are compositionally biased toward basic and acidic residues: residues Lys112 to Pro123 and Leu138 to Tyr148. Positions Gln149–Asp158 are enriched in acidic residues. WD repeat units lie at residues Gly445 to Glu486, Asp488 to Val526, Thr570 to Pro612, Lys615 to Lys653, Thr656 to Gln695, Leu699 to Gln738, and Arg754 to Thr784.

This sequence belongs to the WD repeat BOP1/ERB1 family.

The protein resides in the nucleus. Its subcellular location is the nucleolus. It is found in the nucleoplasm. Required for maturation of ribosomal RNAs and formation of the large ribosomal subunit. In Drosophila melanogaster (Fruit fly), this protein is Ribosome biogenesis protein BOP1 homolog.